Reading from the N-terminus, the 373-residue chain is NAD-dependent protein deacylase SRT2 (373 aa).

The N-terminal 47 residues, 1 to 47, are a transit peptide targeting the mitochondrion; the sequence is MNMRRVFGGVSTDLFPSRSMYRPLQSGGNLVMLFKGCRRFVRTTCRV. In terms of domain architecture, Deacetylase sirtuin-type spans 75–373; sequence DPPNMEDIHK…DVGSLSVPAL (299 aa). NAD(+) is bound by residues 100 to 120 and 179 to 182; these read GAGV…GAYS and QNVD. The active-site Proton acceptor is the His196. The Zn(2+) site is built by Cys204, Cys207, Cys271, and Cys274. Residues 311–313, 337–339, and Val355 contribute to the NAD(+) site; these read GSS and NIG.

This sequence belongs to the sirtuin family. Class II subfamily. As to quaternary structure, binds to the promoter region of genes influenced by ethylene. Interacts with ENAP1; this interaction is enhanced in the presence of ethylene. Zn(2+) is required as a cofactor.

It localises to the mitochondrion matrix. It is found in the nucleus. It carries out the reaction N(6)-acetyl-L-lysyl-[protein] + NAD(+) + H2O = 2''-O-acetyl-ADP-D-ribose + nicotinamide + L-lysyl-[protein]. Functionally, NAD-dependent protein deacylase. Catalyzes the NAD-dependent hydrolysis of acyl groups from lysine residues. Involved in responses to ethylene leading to the transcriptional repression of some ethylene-responsive genes via the regulation of histone acetylation H3K9Ac. Negatively regulates plant basal defense against plant pathogens, possibly by suppressing salicylic acid biosynthesis. This Arabidopsis thaliana (Mouse-ear cress) protein is NAD-dependent protein deacylase SRT2.